The chain runs to 137 residues: Small ribosomal subunit protein uS19 (137 aa).

The interval 115-137 (RNRVSHGSAGVGATRSSKFVPLK) is disordered.

The protein belongs to the universal ribosomal protein uS19 family.

In terms of biological role, protein S19 forms a complex with S13 that binds strongly to the 16S ribosomal RNA. The chain is Small ribosomal subunit protein uS19 from Methanococcoides burtonii (strain DSM 6242 / NBRC 107633 / OCM 468 / ACE-M).